A 504-amino-acid polypeptide reads, in one-letter code: Probable cytosol aminopeptidase (504 aa).

Mn(2+) contacts are provided by K274 and D279. Residue K286 is part of the active site. Mn(2+) is bound by residues D297, D356, and E358. The active site involves R360.

The protein belongs to the peptidase M17 family. Requires Mn(2+) as cofactor.

The protein localises to the cytoplasm. The enzyme catalyses Release of an N-terminal amino acid, Xaa-|-Yaa-, in which Xaa is preferably Leu, but may be other amino acids including Pro although not Arg or Lys, and Yaa may be Pro. Amino acid amides and methyl esters are also readily hydrolyzed, but rates on arylamides are exceedingly low.. The catalysed reaction is Release of an N-terminal amino acid, preferentially leucine, but not glutamic or aspartic acids.. In terms of biological role, presumably involved in the processing and regular turnover of intracellular proteins. Catalyzes the removal of unsubstituted N-terminal amino acids from various peptides. This Blochmanniella floridana protein is Probable cytosol aminopeptidase.